Consider the following 349-residue polypeptide: Fe(3+) ions import ATP-binding protein FbpC (349 aa).

An ABC transporter domain is found at 4–236 (LDFNKIGKSY…PIDEPTATFL (233 aa)). 36–43 (GPSGSGKT) is an ATP binding site.

This sequence belongs to the ABC transporter superfamily. Fe(3+) ion importer (TC 3.A.1.10) family. As to quaternary structure, the complex is composed of two ATP-binding proteins (FbpC), two transmembrane proteins (FbpB) and a solute-binding protein (FbpA).

Its subcellular location is the cell inner membrane. The catalysed reaction is Fe(3+)(out) + ATP + H2O = Fe(3+)(in) + ADP + phosphate + H(+). Part of the ABC transporter complex FbpABC involved in Fe(3+) ions import. Responsible for energy coupling to the transport system. The chain is Fe(3+) ions import ATP-binding protein FbpC from Yersinia enterocolitica.